The chain runs to 377 residues: RCC1 domain-containing protein 1 (377 aa).

An interaction with KDM8 region spans residues 1-172 (MAEKRHGAWF…VRQLELGAEH (172 aa)). The RCC1 1 repeat unit spans residues 6 to 57 (HGAWFGFGFCGFGQALGSGNSHHSVYSPEPLHASDDICQVSAGWSYTALVTR). At arginine 144 the chain carries (3R)-3-hydroxyarginine. RCC1 repeat units follow at residues 179-230 (AGQV…CLSE), 232-289 (GDIY…IAIQ), and 319-372 (TGEL…VYAM).

As to quaternary structure, found in a complex with KDM8. Interacts (via N-terminus) with KDM8 (via N-terminus). Post-translationally, specifically hydroxylated (with R stereochemistry) at C-3 of ARG-141 by KDM8.

The protein resides in the chromosome. Its function is as follows. Plays a role in transcriptional repression of satellite repeats, possibly by regulating H3K36 methylation levels in centromeric regions together with KDM8. Possibly together with KDM8, is involved in proper mitotic spindle organization and chromosome segregation. Plays a role in regulating alpha-tubulin deacetylation and cytoskeletal microtubule stability, thereby promoting cell migration and TGF-beta-induced epithelial to mesenchymal transition (EMT), potentially through the inhibition of KDM8. The sequence is that of RCC1 domain-containing protein 1 (Rccd1) from Mus musculus (Mouse).